A 580-amino-acid chain; its full sequence is Glypican-3 (580 aa).

The N-terminal stretch at 1-24 is a signal peptide; that stretch reads MAGTVRTACLVVAMLLSLDFPGQA. Residue Gln-25 is modified to Pyrrolidone carboxylic acid. 7 disulfides stabilise this stretch: Cys-35–Cys-72, Cys-65–Cys-262, Cys-73–Cys-265, Cys-197–Cys-349, Cys-252–Cys-285, Cys-274–Cys-422, and Cys-278–Cys-410. N-linked (GlcNAc...) asparagine glycans are attached at residues Asn-124 and Asn-241. Position 352 is a phosphoserine (Ser-352). Asn-418 carries an N-linked (GlcNAc...) asparagine glycan. O-linked (Xyl...) (glycosaminoglycan) serine glycans are attached at residues Ser-495 and Ser-509. Asn-554 carries GPI-anchor amidated asparagine lipidation. Positions 555–580 are cleaved as a propeptide — removed in mature form; sequence LGNVHSPLKLLTSMAISVVCFFFLVH.

It belongs to the glypican family. As to quaternary structure, heterodimer; disulfide-linked. Cleavage by a furin-like convertase results in production of alpha and beta chains which form a disulfide-linked heterodimer. Interacts with DPP4. Interacts with FGF2. Interacts with WNT5A. Also interacts with WNT3A and WNT7B. Interacts with hedgehog protein SHH; the heparan sulfate chains are not required for the interaction. Also interacts with hedgehog protein IHH. Interacts with CD81. Interacts with Wnt receptors FZD4, FZD7 and FZD8; the heparan sulfate chains are required for the interaction. O-glycosylated; contains heparan sulfate and/or chondroitin sulfate. In terms of processing, cleaved intracellularly by a furin-like convertase to generate 2 subunits, alpha and beta, which remain associated through disulfide bonds and are associated with the cell surface via the GPI-anchor. This processing is essential for its role in inhibition of hedgehog signaling. A second proteolytic event may result in cleavage of the protein on the cell surface, separating it from the GPI-anchor and leading to its shedding from the cell surface.

It localises to the cell membrane. Functionally, cell surface proteoglycan. Negatively regulates the hedgehog signaling pathway when attached via the GPI-anchor to the cell surface by competing with the hedgehog receptor PTC1 for binding to hedgehog proteins. Binding to the hedgehog protein SHH triggers internalization of the complex by endocytosis and its subsequent lysosomal degradation. Positively regulates the canonical Wnt signaling pathway by binding to the Wnt receptor Frizzled and stimulating the binding of the Frizzled receptor to Wnt ligands. Positively regulates the non-canonical Wnt signaling pathway. Binds to CD81 which decreases the availability of free CD81 for binding to the transcriptional repressor HHEX, resulting in nuclear translocation of HHEX and transcriptional repression. Inhibits the dipeptidyl peptidase activity of DPP4. Plays a role in limb patterning and skeletal development by controlling the cellular response to BMP4. Modulates the effects of growth factors BMP2, BMP7 and FGF7 on renal branching morphogenesis. Required for coronary vascular development. Plays a role in regulating cell movements during gastrulation. This is Glypican-3 (GPC3) from Pan troglodytes (Chimpanzee).